The chain runs to 158 residues: MRVLPLALLVGLLAVSDAKVLGKCEFARLLETRYNLSRNDIKNWVCIAEFESSFNTAATNRNRNRSTDYGIFQINNKYWCGSDYGKNVCGIPCSDLMSDDITAALRCAETVRRATERYRGRGKGYTAWVAYNSKCKKRDLDQYMAECWSRGSNSIFPF.

Positions Met-1–Ala-18 are cleaved as a signal peptide. The C-type lysozyme domain occupies Lys-19–Arg-150. Disulfide bonds link Cys-24/Cys-147, Cys-46/Cys-135, Cys-80/Cys-93, and Cys-89/Cys-107. Catalysis depends on residues Glu-51 and Asp-68.

The protein belongs to the glycosyl hydrolase 22 family. Monomer. Strongly expressed in gill and gonad, and marginally detectable in hemolymph and lymphoid organ. Not expressed in kidney, hepatopancreas or tail muscle.

The protein localises to the secreted. It carries out the reaction Hydrolysis of (1-&gt;4)-beta-linkages between N-acetylmuramic acid and N-acetyl-D-glucosamine residues in a peptidoglycan and between N-acetyl-D-glucosamine residues in chitodextrins.. Functionally, lysozymes have primarily a bacteriolytic function; those in tissues and body fluids are associated with the monocyte-macrophage system and enhance the activity of immunoagents. Has bacteriolytic activity against Gram-positive bacterium M.luteus, and Gram-negative shrimp pathogenic bacteria V.alginolyticus, V.parahaemolyticus and V.vulnificus. May play a role in host defense. This is Lysozyme C from Penaeus merguiensis (Banana prawn).